The chain runs to 220 residues: UPF0319 protein YccT (220 aa).

The N-terminal stretch at 1-20 (MKTGALTTFLALCLPVTVFA) is a signal peptide.

The protein belongs to the UPF0319 family.

The chain is UPF0319 protein YccT from Salmonella choleraesuis (strain SC-B67).